Here is a 144-residue protein sequence, read N- to C-terminus: Large ribosomal subunit protein uL15 (144 aa).

Residues 1–56 (MELNNLKPAEGAKHAKRRVGRGIGSGLGKTAGRGHKGQKSRSGGFHKVGFEGGQMP) form a disordered region. The segment covering 21 to 31 (RGIGSGLGKTA) has biased composition (gly residues).

It belongs to the universal ribosomal protein uL15 family. Part of the 50S ribosomal subunit.

Binds to the 23S rRNA. In Burkholderia mallei (strain NCTC 10247), this protein is Large ribosomal subunit protein uL15.